The chain runs to 234 residues: BTB/POZ domain-containing protein KCTD5 (234 aa).

Ala2 is subject to N-acetylalanine. Phosphoserine is present on Ser10. The region spanning 44-146 (KWVRLNVGGT…LVKDKIRERD (103 aa)) is the BTB domain. A disordered region spans residues 213-234 (PYGTASEPSEKAKILQERGSRM). Basic and acidic residues predominate over residues 220–234 (PSEKAKILQERGSRM).

Homopentamer. Interacts (via C-terminus) with GRASP55/GORASP2. Interacts with CUL3 and with ubiquitinated proteins. Interacts with CRY1. In terms of assembly, (Microbial infection) Interacts with adeno-associated virus 2 (AAV-2) REP proteins.

The protein resides in the cytoplasm. Its subcellular location is the cytosol. The protein localises to the nucleus. Functionally, its interaction with CUL3 suggests that it may act as a substrate adapter in some E3 ligase complex. Does not affect the function of Kv channel Kv2.1/KCNB1, Kv1.2/KCNA2, Kv4.2/KCND2 and Kv3.4/KCNC4. In Homo sapiens (Human), this protein is BTB/POZ domain-containing protein KCTD5 (KCTD5).